The following is a 345-amino-acid chain: D-fructose 1,6-bisphosphatase class 2/sedoheptulose 1,7-bisphosphatase (345 aa).

Residues Asp-33, Glu-57, Asp-97, and Glu-100 each contribute to the Mn(2+) site. Substrate is bound by residues 100–102 (EGT), Tyr-131, 176–178 (RDR), and 198–200 (DGD). Position 225 (Glu-225) interacts with Mn(2+).

Belongs to the FBPase class 2 family. In terms of assembly, homotetramer. Requires Mn(2+) as cofactor.

It catalyses the reaction beta-D-fructose 1,6-bisphosphate + H2O = beta-D-fructose 6-phosphate + phosphate. It carries out the reaction D-sedoheptulose 1,7-bisphosphate + H2O = D-sedoheptulose 7-phosphate + phosphate. The protein operates within carbohydrate biosynthesis; Calvin cycle. Catalyzes the hydrolysis of fructose 1,6-bisphosphate (Fru 1,6-P2) and sedoheptulose 1,7-bisphosphate (Sed 1,7-P2) to fructose 6-phosphate and sedoheptulose 7-phosphate, respectively. This Nostoc sp. (strain PCC 7120 / SAG 25.82 / UTEX 2576) protein is D-fructose 1,6-bisphosphatase class 2/sedoheptulose 1,7-bisphosphatase.